The following is a 511-amino-acid chain: Histidine ammonia-lyase 2 (511 aa).

Residues 144 to 146 constitute a cross-link (5-imidazolinone (Ser-Gly)); the sequence is SSG. Residue Ser145 is modified to 2,3-didehydroalanine (Ser).

This sequence belongs to the PAL/histidase family. Post-translationally, contains an active site 4-methylidene-imidazol-5-one (MIO), which is formed autocatalytically by cyclization and dehydration of residues Ser-Ser-Gly.

The protein localises to the cytoplasm. It carries out the reaction L-histidine = trans-urocanate + NH4(+). Its pathway is amino-acid degradation; L-histidine degradation into L-glutamate; N-formimidoyl-L-glutamate from L-histidine: step 1/3. This is Histidine ammonia-lyase 2 (hutH2) from Fusobacterium nucleatum subsp. nucleatum (strain ATCC 25586 / DSM 15643 / BCRC 10681 / CIP 101130 / JCM 8532 / KCTC 2640 / LMG 13131 / VPI 4355).